Reading from the N-terminus, the 395-residue chain is Proteinase-activated receptor 4 (395 aa).

Positions 1 to 16 are cleaved as a signal peptide; that stretch reads MCWPLLYPLMLGFSIS. Residues 17-58 constitute a propeptide, removed for receptor activation; sequence PAECQTPSIYDDVESTREGQEASLRPTVELNESKSPDKPNPR. The tract at residues 46–66 is disordered; that stretch reads LNESKSPDKPNPRGFPGKPCA. The segment covering 47-56 has biased composition (basic and acidic residues); it reads NESKSPDKPN. Over 59-93 the chain is Extracellular; sequence GFPGKPCANNSDTLELPASSEALLLGWVPTRLVPA. N67 carries N-linked (GlcNAc...) asparagine glycosylation. A helical membrane pass occupies residues 94 to 114; that stretch reads IYGLVVVVGLPANGLALWVLA. Residues 115–119 lie on the Cytoplasmic side of the membrane; it reads TRVPR. Residues 120–140 form a helical membrane-spanning segment; that stretch reads LPSTILLMNLAVADLLLALVL. Residues 141-161 are Extracellular-facing; it reads PPRLVYHLRGQRWPFGEAACR. C160 and C239 are disulfide-bonded. A helical transmembrane segment spans residues 162–182; sequence VATAALYGHMYGSVLLLAAVS. Residues 183–203 are Cytoplasmic-facing; it reads LDRYLALVHSLRARALRGQRL. Residues 204-224 form a helical membrane-spanning segment; that stretch reads TTILCLVAWLSAATLVLPLTF. Residues 225-254 are Extracellular-facing; sequence HRQTFLLAGSDRMLCHDALPLAEQTSHWRP. Residues 255–275 traverse the membrane as a helical segment; it reads AFICLAVLGCFVPLLAMVLCY. The Cytoplasmic portion of the chain corresponds to 276–295; the sequence is GATLRALAANGQRYSHAVRL. A helical transmembrane segment spans residues 296–316; it reads TALVLFSAVAAFTPSNVLLVL. Residues 317–330 lie on the Extracellular side of the membrane; that stretch reads HYSNPSPEAWGNLY. Residues 331-354 form a helical membrane-spanning segment; that stretch reads GAYVPSLALSTLNSCVDPFIYYYV. The Cytoplasmic segment spans residues 355–395; the sequence is SHEFREKVRAMLCRQLKASSSSQASREAGSRGTAICSSTLL.

Belongs to the G-protein coupled receptor 1 family. Post-translationally, a proteolytic cleavage generates a new N-terminus that functions as a tethered ligand.

It is found in the cell membrane. Functionally, receptor for activated thrombin or trypsin coupled to G proteins that stimulate phosphoinositide hydrolysis. May play a role in platelets activation. The protein is Proteinase-activated receptor 4 (F2rl3) of Rattus norvegicus (Rat).